The sequence spans 311 residues: Ribosomal protein L11 methyltransferase (311 aa).

Residues T162, G183, D205, and N248 each contribute to the S-adenosyl-L-methionine site.

It belongs to the methyltransferase superfamily. PrmA family.

Its subcellular location is the cytoplasm. The catalysed reaction is L-lysyl-[protein] + 3 S-adenosyl-L-methionine = N(6),N(6),N(6)-trimethyl-L-lysyl-[protein] + 3 S-adenosyl-L-homocysteine + 3 H(+). Methylates ribosomal protein L11. The chain is Ribosomal protein L11 methyltransferase from Bacillus pumilus (strain SAFR-032).